A 215-amino-acid polypeptide reads, in one-letter code: Rac-like GTP-binding protein ARAC10 (215 aa).

GTP is bound at residue 15–22; that stretch reads GDGAVGKT. Residues 37-45 carry the Effector region motif; that stretch reads YIPTVFDNF. GTP contacts are provided by residues 62–66 and 120–123; these read DTAGQ and TKLD. Residues Cys-202 and Cys-208 are each lipidated (S-palmitoyl cysteine).

The protein belongs to the small GTPase superfamily. Rho family. As to quaternary structure, component of the active ARAC10-IRC5-KIN13A complex. Interacts with ICR5.

It localises to the membrane. Its subcellular location is the cytoplasm. It is found in the cytoskeleton. In terms of biological role, involved in local disassembly of cortical microtubules when associated with ICR5 and KIN13A. The protein is Rac-like GTP-binding protein ARAC10 (ARAC10) of Arabidopsis thaliana (Mouse-ear cress).